The following is a 325-amino-acid chain: Acetyl-coenzyme A carboxylase carboxyl transferase subunit alpha (325 aa).

In terms of domain architecture, CoA carboxyltransferase C-terminal spans 35 to 292 (EIEKLEARLA…DKVLKRSLKQ (258 aa)).

The protein belongs to the AccA family. Acetyl-CoA carboxylase is a heterohexamer composed of biotin carboxyl carrier protein (AccB), biotin carboxylase (AccC) and two subunits each of ACCase subunit alpha (AccA) and ACCase subunit beta (AccD).

It localises to the cytoplasm. It catalyses the reaction N(6)-carboxybiotinyl-L-lysyl-[protein] + acetyl-CoA = N(6)-biotinyl-L-lysyl-[protein] + malonyl-CoA. It functions in the pathway lipid metabolism; malonyl-CoA biosynthesis; malonyl-CoA from acetyl-CoA: step 1/1. Component of the acetyl coenzyme A carboxylase (ACC) complex. First, biotin carboxylase catalyzes the carboxylation of biotin on its carrier protein (BCCP) and then the CO(2) group is transferred by the carboxyltransferase to acetyl-CoA to form malonyl-CoA. This chain is Acetyl-coenzyme A carboxylase carboxyl transferase subunit alpha, found in Geobacillus sp. (strain WCH70).